A 323-amino-acid chain; its full sequence is Muscleblind-like protein 3 (323 aa).

4 C3H1-type zinc fingers span residues 13–41 (WLTL…HPSR), 47–73 (NGRV…HPPP), 177–205 (TDKL…HPLE), and 213–239 (ENSV…HPPA).

It belongs to the muscleblind family. As to expression, expressed in fast and slow myotomal muscle, heart, liver, skin, brain and testis.

Its subcellular location is the nucleus. It localises to the cytoplasm. Its function is as follows. Involved in pre-mRNA alternative splicing regulation. Could inhibit terminal muscle differentiation, acting at approximately the time of myogenin induction. This Takifugu rubripes (Japanese pufferfish) protein is Muscleblind-like protein 3 (mbnl3).